Consider the following 405-residue polypeptide: Argininosuccinate synthase (405 aa).

ATP is bound by residues 10–18 (AYSGGLDTS) and Ala-37. L-citrulline is bound by residues Tyr-88 and Ser-93. Gly-118 is an ATP binding site. Residues Thr-120, Asn-124, and Asp-125 each contribute to the L-aspartate site. Asn-124 serves as a coordination point for L-citrulline. 5 residues coordinate L-citrulline: Arg-128, Ser-179, Ser-188, Glu-264, and Tyr-276.

It belongs to the argininosuccinate synthase family. Type 1 subfamily. Homotetramer.

Its subcellular location is the cytoplasm. The enzyme catalyses L-citrulline + L-aspartate + ATP = 2-(N(omega)-L-arginino)succinate + AMP + diphosphate + H(+). It participates in amino-acid biosynthesis; L-arginine biosynthesis; L-arginine from L-ornithine and carbamoyl phosphate: step 2/3. In Pseudomonas syringae pv. syringae (strain B728a), this protein is Argininosuccinate synthase.